A 497-amino-acid chain; its full sequence is MYHVPLIPRDAGREETIFRINQSLQKLLRVSDEIFDRVEHRITRIHGKAEAIDRRTEVLEKKLESLQESDKVITFTLPRQLPKLPEEPPTSTSLFRINIDTEHFPGSEELPAFRRADDHVLRPCEPIDFTYELNKPDKFFLTSQVLKEYEQKGWERYKKRLLGGLRELSRSPEHIAELFYAGTSIPAFEGVSGDFSKKALDADDDGGTSRSGRTTDELAQLRLHEQLLEDTALSSTLMQEDSLDDNHPLAFRINFNEKKKKTAKMVEMPDSLPNLKGHAHDFTLRDPEIDEDRLLDILPADDQIPEASEPTEAEADAPTTFILPPPPPPMKLDPSPQPAATPVEITEIPPIISPPAPPPPPPPPPPPPPPQTPSASSSVTFSPTKSVDGGRSDLMAAIRAAGGAGNAKLSRIAEKPKRKGKFDGILESSALLGASETPRNSAPAPDGGGGGGDLMSALSKALDARRKAINGKVEAQPPAKVSSTIPAPPNFDDEEWD.

Positions 306–497 (EASEPTEAEA…PPNFDDEEWD (192 aa)) are disordered. Residues 323–339 (LPPPPPPMKLDPSPQPA) are compositionally biased toward pro residues. The span at 341 to 350 (TPVEITEIPP) shows a compositional bias: low complexity. Residues 351–372 (IISPPAPPPPPPPPPPPPPPQT) are compositionally biased toward pro residues. The WH2 domain maps to 390-412 (GRSDLMAAIRAAGGAGNAKLSRI).

It belongs to the WASH1 family. Component of the WASH core complex. Component of the DHIC (ddl-1-containing hsf-1 inhibitory) complex, which contains at least ddl-1, ddl-2, hsb-1 and hsf-1. Within the complex, interacts with ddl-1. Formation of the DHIC may be dependent upon the Insulin/IGF-1-like signaling (IIS) mediated pathway. As to expression, expressed in several neurons located throughout the body.

Acts as a component of the WASH core complex that functions as a nucleation-promoting factor (NPF) at the surface of endosomes, where it recruits and activates the Arp2/3 complex to induce actin polymerization, playing a key role in the fission of tubules that serve as transport intermediates during endosome sorting. Acts as a component of the DHIC (ddl-1-containing hsf-1 inhibitory complex) which modulates lifespan by sequestering the heat shock transcription factor hsf-1 to negatively regulate its binding to DNA and its transcriptional activity. This is WASH complex subunit homolog 1 from Caenorhabditis elegans.